A 490-amino-acid chain; its full sequence is NAI2-like protein (490 aa).

A signal peptide spans 1–24 (MGRKYVVLGLAVCLFLSSFNEVSC). 2 disordered regions span residues 43-83 (EEGE…VDKF) and 155-206 (AATN…FNKG). A coiled-coil region spans residues 136–163 (IADERRQRLEDIERKLKAAAATNIVVED). Residues 171–183 (KVEETQEVVKFES) show a composition bias toward basic and acidic residues. The span at 184–199 (ESSSASSESRRQSSSS) shows a compositional bias: low complexity. A coiled-coil region spans residues 433–465 (TFEKTVANLSRVIEEASQAYEEYHVVVRKWKEE).

In Arabidopsis thaliana (Mouse-ear cress), this protein is NAI2-like protein.